Consider the following 265-residue polypeptide: 2-Cys peroxiredoxin BAS1, chloroplastic (265 aa).

Residues 1–65 constitute a chloroplast transit peptide; sequence MACVASSTTL…SSTSRRSFAV (65 aa). The Thioredoxin domain occupies 73 to 232; the sequence is PLVGNKAPDF…TMRTLQALQY (160 aa). The active-site Cysteine sulfenic acid (-SOH) intermediate is the Cys119.

This sequence belongs to the peroxiredoxin family. AhpC/Prx1 subfamily. Homodimer; disulfide-linked, upon oxidation.

The protein resides in the plastid. It localises to the chloroplast. It catalyses the reaction a hydroperoxide + [thioredoxin]-dithiol = an alcohol + [thioredoxin]-disulfide + H2O. In terms of biological role, thiol-specific peroxidase that catalyzes the reduction of hydrogen peroxide and organic hydroperoxides to water and alcohols, respectively. Plays a role in cell protection against oxidative stress by detoxifying peroxides. May be an antioxidant enzyme particularly in the developing shoot and photosynthesizing leaf. The polypeptide is 2-Cys peroxiredoxin BAS1, chloroplastic (BAS1) (Spinacia oleracea (Spinach)).